Consider the following 297-residue polypeptide: Ribonuclease HIII (297 aa).

The 217-residue stretch at 81–297 (IPIIGTDEVG…NTKKAQALLK (217 aa)) folds into the RNase H type-2 domain. A divalent metal cation-binding residues include Asp-87, Glu-88, and Asp-192.

This sequence belongs to the RNase HII family. RnhC subfamily. Requires Mn(2+) as cofactor. The cofactor is Mg(2+).

Its subcellular location is the cytoplasm. It catalyses the reaction Endonucleolytic cleavage to 5'-phosphomonoester.. In terms of biological role, endonuclease that specifically degrades the RNA of RNA-DNA hybrids. This Streptococcus agalactiae serotype Ia (strain ATCC 27591 / A909 / CDC SS700) protein is Ribonuclease HIII.